A 520-amino-acid polypeptide reads, in one-letter code: Putative hydrolase Mb2247c (520 aa).

The N-terminal stretch at 1–34 (MAAMWRRRPLSSALLSFGLLLGGLPLAAPPLAGA) is a signal peptide. A helical membrane pass occupies residues 104–124 (FGALLVNPGGPGASAVDMVAA). An AB hydrolase-1 domain is found at 105 to 403 (GALLVNPGGP…APTPADPAAW (299 aa)). S232 (nucleophile) is an active-site residue. D461 is a catalytic residue. H488 functions as the Proton donor in the catalytic mechanism.

Belongs to the peptidase S33 family.

It is found in the cell membrane. This is Putative hydrolase Mb2247c from Mycobacterium bovis (strain ATCC BAA-935 / AF2122/97).